The following is a 141-amino-acid chain: Lutropin subunit beta (141 aa).

An N-terminal signal peptide occupies residues Met1–Gly22. 6 disulfides stabilise this stretch: Cys30/Cys78, Cys44/Cys93, Cys47/Cys131, Cys55/Cys109, Cys59/Cys111, and Cys114/Cys121. A glycan (N-linked (GlcNAc...) asparagine) is linked at Asn34.

This sequence belongs to the glycoprotein hormones subunit beta family. Heterodimer of a common alpha chain and a unique beta chain which confers biological specificity to thyrotropin, lutropin, follitropin and gonadotropin.

It is found in the secreted. Promotes spermatogenesis and ovulation by stimulating the testes and ovaries to synthesize steroids. The protein is Lutropin subunit beta (LHB) of Trichosurus vulpecula (Brush-tailed possum).